A 669-amino-acid polypeptide reads, in one-letter code: DNA ligase (669 aa).

NAD(+)-binding positions include 34-38, 83-84, and Glu-114; these read DAEYD and SL. Lys-116 (N6-AMP-lysine intermediate) is an active-site residue. Arg-137, Glu-171, Lys-287, and Lys-311 together coordinate NAD(+). Zn(2+) contacts are provided by Cys-405, Cys-408, Cys-423, and Cys-428. Residues 591–669 enclose the BRCT domain; it reads NVESYFAGKT…EERFLQELNK (79 aa).

It belongs to the NAD-dependent DNA ligase family. LigA subfamily. The cofactor is Mg(2+). Requires Mn(2+) as cofactor.

It carries out the reaction NAD(+) + (deoxyribonucleotide)n-3'-hydroxyl + 5'-phospho-(deoxyribonucleotide)m = (deoxyribonucleotide)n+m + AMP + beta-nicotinamide D-nucleotide.. In terms of biological role, DNA ligase that catalyzes the formation of phosphodiester linkages between 5'-phosphoryl and 3'-hydroxyl groups in double-stranded DNA using NAD as a coenzyme and as the energy source for the reaction. It is essential for DNA replication and repair of damaged DNA. This Bacillus cereus (strain ATCC 10987 / NRS 248) protein is DNA ligase.